The following is a 126-amino-acid chain: Holo-[acyl-carrier-protein] synthase (126 aa).

Residues Asp9 and Glu58 each contribute to the Mg(2+) site.

Belongs to the P-Pant transferase superfamily. AcpS family. The cofactor is Mg(2+).

The protein localises to the cytoplasm. It catalyses the reaction apo-[ACP] + CoA = holo-[ACP] + adenosine 3',5'-bisphosphate + H(+). Functionally, transfers the 4'-phosphopantetheine moiety from coenzyme A to a Ser of acyl-carrier-protein. The chain is Holo-[acyl-carrier-protein] synthase from Cronobacter sakazakii (strain ATCC BAA-894) (Enterobacter sakazakii).